The chain runs to 119 residues: Large ribosomal subunit protein bL20c (119 aa).

The protein belongs to the bacterial ribosomal protein bL20 family.

It localises to the plastid. Its subcellular location is the chloroplast. In terms of biological role, binds directly to 23S ribosomal RNA and is necessary for the in vitro assembly process of the 50S ribosomal subunit. It is not involved in the protein synthesizing functions of that subunit. The protein is Large ribosomal subunit protein bL20c of Saccharum officinarum (Sugarcane).